The chain runs to 403 residues: Argininosuccinate synthase (403 aa).

10–18 (AYSGGLDTS) provides a ligand contact to ATP. Tyr-87 serves as a coordination point for L-citrulline. Gly-117 is an ATP binding site. L-aspartate contacts are provided by Thr-119, Asn-123, and Asp-124. Asn-123 lines the L-citrulline pocket. Positions 127, 175, 260, and 272 each coordinate L-citrulline.

The protein belongs to the argininosuccinate synthase family. Type 1 subfamily. Homotetramer.

It localises to the cytoplasm. It carries out the reaction L-citrulline + L-aspartate + ATP = 2-(N(omega)-L-arginino)succinate + AMP + diphosphate + H(+). Its pathway is amino-acid biosynthesis; L-arginine biosynthesis; L-arginine from L-ornithine and carbamoyl phosphate: step 2/3. In Bacillus subtilis (strain 168), this protein is Argininosuccinate synthase.